We begin with the raw amino-acid sequence, 212 residues long: Prolactin (212 aa).

A signal peptide spans 1–24 (MAQRKTNGSKLFMMVLYMVAACSA). Cystine bridges form between Cys70-Cys185 and Cys202-Cys212.

The protein belongs to the somatotropin/prolactin family. Pituitary gland.

It localises to the secreted. This chain is Prolactin (prl), found in Dicentrarchus labrax (European seabass).